Here is a 504-residue protein sequence, read N- to C-terminus: Lysine--tRNA ligase (504 aa).

The Mg(2+) site is built by glutamate 404 and glutamate 411.

This sequence belongs to the class-II aminoacyl-tRNA synthetase family. In terms of assembly, homodimer. The cofactor is Mg(2+).

The protein localises to the cytoplasm. It catalyses the reaction tRNA(Lys) + L-lysine + ATP = L-lysyl-tRNA(Lys) + AMP + diphosphate. The chain is Lysine--tRNA ligase from Aliarcobacter butzleri (strain RM4018) (Arcobacter butzleri).